Consider the following 506-residue polypeptide: Tripartite terminase subunit 3 (506 aa).

E128 serves as the catalytic For ATPase activity. Active-site for nuclease activity residues include D282, E354, and D475.

This sequence belongs to the herpesviridae TRM3 protein family. As to quaternary structure, interacts with the terminase subunits TRM1 and TRM2. Interacts with portal protein.

Its subcellular location is the host nucleus. Its function is as follows. Component of the molecular motor that translocates viral genomic DNA in empty capsid during DNA packaging. Forms a tripartite terminase complex together with TRM1 and TRM2 in the host cytoplasm. Once the complex reaches the host nucleus, it interacts with the capsid portal vertex. This portal forms a ring in which genomic DNA is translocated into the capsid. TRM3 carries an RNase H-like nuclease activity that plays an important role for the cleavage of concatemeric viral DNA into unit length genomes. The sequence is that of Tripartite terminase subunit 3 from Amazona oratrix (yellow-headed parrot).